Here is a 495-residue protein sequence, read N- to C-terminus: Monoamine oxidase N (495 aa).

Residues 1 to 19 show a composition bias toward polar residues; sequence MTSRDGYQWTPETGLTQGV. The interval 1–23 is disordered; it reads MTSRDGYQWTPETGLTQGVPSLG. The Microbody targeting signal signature appears at 493–495; that stretch reads ARL.

This sequence belongs to the flavin monoamine oxidase family. The cofactor is FAD.

It is found in the peroxisome. The catalysed reaction is a secondary aliphatic amine + O2 + H2O = a primary amine + an aldehyde + H2O2. The chain is Monoamine oxidase N (maoN) from Aspergillus niger.